The following is a 291-amino-acid chain: Bifunctional protein FolD 1 (291 aa).

NADP(+) is bound by residues 167 to 169 (GAS), I192, and I233.

Belongs to the tetrahydrofolate dehydrogenase/cyclohydrolase family. As to quaternary structure, homodimer.

The enzyme catalyses (6R)-5,10-methylene-5,6,7,8-tetrahydrofolate + NADP(+) = (6R)-5,10-methenyltetrahydrofolate + NADPH. It carries out the reaction (6R)-5,10-methenyltetrahydrofolate + H2O = (6R)-10-formyltetrahydrofolate + H(+). Its pathway is one-carbon metabolism; tetrahydrofolate interconversion. Its function is as follows. Catalyzes the oxidation of 5,10-methylenetetrahydrofolate to 5,10-methenyltetrahydrofolate and then the hydrolysis of 5,10-methenyltetrahydrofolate to 10-formyltetrahydrofolate. The polypeptide is Bifunctional protein FolD 1 (Pseudomonas putida (strain ATCC 47054 / DSM 6125 / CFBP 8728 / NCIMB 11950 / KT2440)).